Reading from the N-terminus, the 604-residue chain is Protein TAX4 (604 aa).

5 disordered regions span residues 38–77, 133–249, 267–300, 338–380, and 394–428; these read HPNGNAGSAERPRHLKVESAPVVKSEPSLPRMRQPEPRSI, FSNR…RQQE, GTLPDLIPRSQRKTSKPRFKHKLLRSPEQQQENL, DETF…KGLK, and PFPHHHHHHHQLHNPNSHHLHTHHHTSSHKFNEDK. Residues 176-185 show a composition bias toward polar residues; that stretch reads YDNNVRSRSI. Composition is skewed to low complexity over residues 186–203 and 224–240; these read SPQVSYSTSLSSSCSISS and SMSSYSLASKASAKASL. Basic residues-rich tracts occupy residues 276 to 290, 366 to 379, and 396 to 421; these read SQRKTSKPRFKHKLL, KKKKSRRSKIKKGL, and PHHHHHHHQLHNPNSHHLHTHHHTSS. Residues 469–559 form the EH domain; that stretch reads ANEDDESHLQ…RVWNSVDGYV (91 aa).

It belongs to the IRS4 family. Interacts with INP51.

In terms of biological role, with IRS4, acts as a positive regulator of INP51 activity and phosphatidylinositol 4,5-bisphosphate turnover. Negatively regulates signaling through the cell integrity pathway, including the MAP kinase SLT2. The chain is Protein TAX4 (TAX4) from Saccharomyces cerevisiae (strain YJM789) (Baker's yeast).